The following is a 462-amino-acid chain: Chitinase 1 (462 aa).

Positions 1 to 17 (MILNLIILLAISIVASA) are cleaved as a signal peptide. A GH18 domain is found at 18-291 (SNIAAYWGQN…NQLYQALSGS (274 aa)). Asn57 is a glycosylation site (N-linked (GlcNAc...) asparagine). Catalysis depends on Glu147, which acts as the Proton donor.

The protein belongs to the glycosyl hydrolase 18 family. Chitinase class III subfamily.

The protein localises to the secreted. It carries out the reaction Random endo-hydrolysis of N-acetyl-beta-D-glucosaminide (1-&gt;4)-beta-linkages in chitin and chitodextrins.. The chain is Chitinase 1 (CHT1) from Candida albicans (Yeast).